The chain runs to 257 residues: UPF0246 protein CV_1250 (257 aa).

Belongs to the UPF0246 family.

This is UPF0246 protein CV_1250 from Chromobacterium violaceum (strain ATCC 12472 / DSM 30191 / JCM 1249 / CCUG 213 / NBRC 12614 / NCIMB 9131 / NCTC 9757 / MK).